The following is a 713-amino-acid chain: Ribosomal RNA large subunit methyltransferase K/L (713 aa).

A THUMP domain is found at 43–154 (LAYRITLWTR…NGVITIAMNF (112 aa)).

This sequence belongs to the methyltransferase superfamily. RlmKL family.

It localises to the cytoplasm. The enzyme catalyses guanosine(2445) in 23S rRNA + S-adenosyl-L-methionine = N(2)-methylguanosine(2445) in 23S rRNA + S-adenosyl-L-homocysteine + H(+). It catalyses the reaction guanosine(2069) in 23S rRNA + S-adenosyl-L-methionine = N(2)-methylguanosine(2069) in 23S rRNA + S-adenosyl-L-homocysteine + H(+). Specifically methylates the guanine in position 2445 (m2G2445) and the guanine in position 2069 (m7G2069) of 23S rRNA. This is Ribosomal RNA large subunit methyltransferase K/L from Shewanella sp. (strain ANA-3).